The primary structure comprises 374 residues: Carbamoyl phosphate synthase small chain (374 aa).

The segment at 1 to 185 (MKAILALEDG…DVSSGYKWSD (185 aa)) is CPSase. Positions 45, 237, and 239 each coordinate L-glutamine. The 186-residue stretch at 189–374 (RLVLVDYGVK…RNLVKDATGK (186 aa)) folds into the Glutamine amidotransferase type-1 domain. Cys-264 functions as the Nucleophile in the catalytic mechanism. The L-glutamine site is built by Leu-265, Gln-268, Asn-306, Gly-308, and Phe-309. Residues His-347 and Glu-349 contribute to the active site.

Belongs to the CarA family. Composed of two chains; the small (or glutamine) chain promotes the hydrolysis of glutamine to ammonia, which is used by the large (or ammonia) chain to synthesize carbamoyl phosphate. Tetramer of heterodimers (alpha,beta)4.

It catalyses the reaction hydrogencarbonate + L-glutamine + 2 ATP + H2O = carbamoyl phosphate + L-glutamate + 2 ADP + phosphate + 2 H(+). The catalysed reaction is L-glutamine + H2O = L-glutamate + NH4(+). Its pathway is amino-acid biosynthesis; L-arginine biosynthesis; carbamoyl phosphate from bicarbonate: step 1/1. It participates in pyrimidine metabolism; UMP biosynthesis via de novo pathway; (S)-dihydroorotate from bicarbonate: step 1/3. Its function is as follows. Small subunit of the glutamine-dependent carbamoyl phosphate synthetase (CPSase). CPSase catalyzes the formation of carbamoyl phosphate from the ammonia moiety of glutamine, carbonate, and phosphate donated by ATP, constituting the first step of 2 biosynthetic pathways, one leading to arginine and/or urea and the other to pyrimidine nucleotides. The small subunit (glutamine amidotransferase) binds and cleaves glutamine to supply the large subunit with the substrate ammonia. In Maridesulfovibrio salexigens (strain ATCC 14822 / DSM 2638 / NCIMB 8403 / VKM B-1763) (Desulfovibrio salexigens), this protein is Carbamoyl phosphate synthase small chain.